Consider the following 350-residue polypeptide: UDP-glucose 4-epimerase 2 (350 aa).

Residues 12–14 (GYI), 33–37 (DNYDN), 63–64 (DL), Phe85, and Lys89 each bind NAD(+). 129-131 (SAT) contributes to the substrate binding site. The Proton acceptor role is filled by Tyr153. The NAD(+) site is built by Lys157 and Tyr181. Residues 181–183 (YFN), 202–204 (NNL), 220–222 (TVF), Arg235, and 297–300 (RPGD) each bind substrate.

It belongs to the NAD(P)-dependent epimerase/dehydratase family. Forms homodimers and heterodimers. It depends on NAD(+) as a cofactor. Widely expressed. Most highly expressed in stems and flowers.

It localises to the cytoplasm. It catalyses the reaction UDP-alpha-D-glucose = UDP-alpha-D-galactose. It functions in the pathway carbohydrate metabolism; galactose metabolism. Its activity is regulated as follows. Enhanced activity by NaCl. Enhanced activity by NAD(+). Strongly inhibited by UDP. Catalyzes the interconversion between UDP-glucose and UDP-galactose. Cooperates with UGE3 in pollen development and with UGE4 in cell wall carbohydrate biosynthesis and growth. The sequence is that of UDP-glucose 4-epimerase 2 from Arabidopsis thaliana (Mouse-ear cress).